We begin with the raw amino-acid sequence, 299 residues long: DNA-binding transcriptional activator HetR (299 aa).

Serine 152 is an active-site residue.

It belongs to the peptidase S48 family. In terms of assembly, homodimer; disulfide-linked.

Its function is as follows. Might be involved in temporal and/or spatial regulation of nitrogen fixation. Dimerization is required for DNA-binding. Has both a protease and a DNA-binding activity. The protein is DNA-binding transcriptional activator HetR of Leptolyngbya boryana (Plectonema boryanum).